The primary structure comprises 466 residues: Histidine--tRNA ligase (466 aa).

The protein belongs to the class-II aminoacyl-tRNA synthetase family. Homodimer.

Its subcellular location is the cytoplasm. It carries out the reaction tRNA(His) + L-histidine + ATP = L-histidyl-tRNA(His) + AMP + diphosphate + H(+). This Bifidobacterium longum subsp. infantis (strain ATCC 15697 / DSM 20088 / JCM 1222 / NCTC 11817 / S12) protein is Histidine--tRNA ligase.